The following is a 95-amino-acid chain: Large ribosomal subunit protein bL27 (95 aa).

Residues 1–24 (MAHKKGTGSTRNGRDSNSQRLGVK) are disordered. A compositionally biased stretch (polar residues) spans 7–20 (TGSTRNGRDSNSQR).

The protein belongs to the bacterial ribosomal protein bL27 family.

In Trichodesmium erythraeum (strain IMS101), this protein is Large ribosomal subunit protein bL27.